Here is a 207-residue protein sequence, read N- to C-terminus: Superoxide dismutase [Mn] (207 aa).

Mn(2+) is bound by residues histidine 28, histidine 76, aspartate 160, and histidine 164.

Belongs to the iron/manganese superoxide dismutase family. It depends on Mn(2+) as a cofactor.

It carries out the reaction 2 superoxide + 2 H(+) = H2O2 + O2. Functionally, destroys superoxide anion radicals which are normally produced within the cells and which are toxic to biological systems. This is Superoxide dismutase [Mn] (sodA) from Mycobacterium leprae (strain TN).